The chain runs to 229 residues: 7-cyano-7-deazaguanine synthase (229 aa).

Position 8-18 (8-18 (FSGGQDSTTCL)) interacts with ATP. The Zn(2+) site is built by cysteine 186, cysteine 195, cysteine 198, and cysteine 201.

This sequence belongs to the QueC family. It depends on Zn(2+) as a cofactor.

It carries out the reaction 7-carboxy-7-deazaguanine + NH4(+) + ATP = 7-cyano-7-deazaguanine + ADP + phosphate + H2O + H(+). The protein operates within purine metabolism; 7-cyano-7-deazaguanine biosynthesis. Catalyzes the ATP-dependent conversion of 7-carboxy-7-deazaguanine (CDG) to 7-cyano-7-deazaguanine (preQ(0)). The protein is 7-cyano-7-deazaguanine synthase of Edwardsiella ictaluri (strain 93-146).